We begin with the raw amino-acid sequence, 550 residues long: Membrane protein insertase YidC (550 aa).

The next 6 helical transmembrane spans lie at 6–26 (LVLFLVFSLSLVMLWNAWLKQ), 333–353 (VVDYGWLTVIAAPLFWVLSWI), 356–376 (VVGNWGWAIIIVTILIKLMFF), 430–450 (LPILVQIPVFISLYWVLLGSV), 469–489 (PYFILPVIMGVSMLIQMKLNP), and 504–524 (PVIFTFMFLWFPSGLVLYWVV).

The protein belongs to the OXA1/ALB3/YidC family. Type 1 subfamily. In terms of assembly, interacts with the Sec translocase complex via SecD. Specifically interacts with transmembrane segments of nascent integral membrane proteins during membrane integration.

The protein resides in the cell inner membrane. Required for the insertion and/or proper folding and/or complex formation of integral membrane proteins into the membrane. Involved in integration of membrane proteins that insert both dependently and independently of the Sec translocase complex, as well as at least some lipoproteins. Aids folding of multispanning membrane proteins. In Aromatoleum aromaticum (strain DSM 19018 / LMG 30748 / EbN1) (Azoarcus sp. (strain EbN1)), this protein is Membrane protein insertase YidC.